The following is a 180-amino-acid chain: Large ribosomal subunit protein uL5 (180 aa).

This sequence belongs to the universal ribosomal protein uL5 family. In terms of assembly, part of the 50S ribosomal subunit; part of the 5S rRNA/L5/L18/L25 subcomplex. Contacts the 5S rRNA and the P site tRNA. Forms a bridge to the 30S subunit in the 70S ribosome.

Functionally, this is one of the proteins that bind and probably mediate the attachment of the 5S RNA into the large ribosomal subunit, where it forms part of the central protuberance. In the 70S ribosome it contacts protein S13 of the 30S subunit (bridge B1b), connecting the 2 subunits; this bridge is implicated in subunit movement. Contacts the P site tRNA; the 5S rRNA and some of its associated proteins might help stabilize positioning of ribosome-bound tRNAs. The polypeptide is Large ribosomal subunit protein uL5 (Cupriavidus metallidurans (strain ATCC 43123 / DSM 2839 / NBRC 102507 / CH34) (Ralstonia metallidurans)).